Consider the following 971-residue polypeptide: Translation initiation factor IF-2 (971 aa).

Residues Asp48 to Lys63 are compositionally biased toward basic and acidic residues. Disordered stretches follow at residues Asp48–Ile86 and Asp100–Gln381. The segment covering Gly105 to Ala114 has biased composition (low complexity). The segment covering Glu121–Ala181 has biased composition (basic and acidic residues). Positions Ala182 to Ala202 are enriched in low complexity. A compositionally biased stretch (basic and acidic residues) spans Asp210–Arg261. A compositionally biased stretch (pro residues) spans Pro277–Pro286. The segment covering Ala304–Ala326 has biased composition (low complexity). A compositionally biased stretch (gly residues) spans Ser356–Lys369. The 170-residue stretch at Pro471–Lys640 folds into the tr-type G domain. The segment at Gly480–Thr487 is G1. Gly480–Thr487 contributes to the GTP binding site. The segment at Gly505–His509 is G2. A G3 region spans residues Asp526–Gly529. GTP contacts are provided by residues Asp526–His530 and Asn580–Asp583. The segment at Asn580–Asp583 is G4. The segment at Ser616–Lys618 is G5.

Belongs to the TRAFAC class translation factor GTPase superfamily. Classic translation factor GTPase family. IF-2 subfamily.

It is found in the cytoplasm. One of the essential components for the initiation of protein synthesis. Protects formylmethionyl-tRNA from spontaneous hydrolysis and promotes its binding to the 30S ribosomal subunits. Also involved in the hydrolysis of GTP during the formation of the 70S ribosomal complex. The chain is Translation initiation factor IF-2 from Burkholderia orbicola (strain AU 1054).